Reading from the N-terminus, the 709-residue chain is Mucin-20 (709 aa).

A signal peptide spans 1–25 (MGCLWGLALPLFFFCWEVGVSGSSA). Positions 57–69 (TQTLSAETSSRAS) are enriched in polar residues. Disordered regions lie at residues 57–92 (TQTL…ARET) and 170–403 (KGLS…WSPG). The span at 78–92 (AETRGAKRISPARET) shows a compositional bias: basic and acidic residues. Composition is skewed to low complexity over residues 173–182 (SSESSASSDS), 190–199 (SRASESSASS), 209–218 (SRASESSASS), 228–237 (SRASESSASS), 247–256 (SRASESSASS), 266–275 (SRASESSASS), 285–294 (SRASESSASS), 304–313 (SRASESSASS), 323–332 (SRASESSASS), 342–351 (SRASESSASS), 361–370 (SRASESSASS), and 380–389 (SRASESSASS). 11 tandem repeats follow at residues 173-192 (SSES…PSRA), 193-211 (SESS…PSRA), 212-230 (SESS…PSRA), 231-249 (SESS…PSRA), 250-268 (SESS…PSRA), 269-287 (SESS…PSRA), 288-306 (SESS…PSRA), 307-325 (SESS…PSRA), 326-344 (SESS…PSRA), 345-363 (SESS…PSRA), and 364-382 (SESS…PSRA). A 12 X 20 AA approximate tandem repeats of S-S-E-S-S-A-S-S-D-S-P-H-P-V-I-T-P-S-R-A region spans residues 173–400 (SSESSASSDS…GPHPVITPSW (228 aa)). Residues 383 to 400 (SESSASSDGPHPVITPSW) form a 12; approximate repeat. N-linked (GlcNAc...) asparagine glycosylation is present at asparagine 423. 2 disordered regions span residues 434 to 515 (SSIP…APGA) and 583 to 657 (NFTP…VSAG). The interval 450–656 (VKASSTSDPP…RTRPTTDVSA (207 aa)) is involved in oligomerization. Polar residues predominate over residues 474–489 (VTASAETLSTAGTTES). A compositionally biased stretch (low complexity) spans 613-652 (TTTNSSRGTNSTLAKITTSAKTTMKPPTATPTTARTRPTT). Asparagine 616 and asparagine 622 each carry an N-linked (GlcNAc...) asparagine glycan. The interval 657–709 (GENGGFLLLRLSVASPEDLTDPRVAERLMQQLHRELHAHAPHFQVSLLRVRRG) is interaction with MET.

In terms of assembly, interacts with MET; oligomerization increases affinity for MET. As to expression, highly expressed in kidney, moderately in placenta, lung, prostate, liver, and digestive system. In the kidney, localized in the proximal tubules but not in the glomerulus or distal tubules. Detected in most of the male urogenital tract epithelia, with the exception of epididymis.

Its subcellular location is the secreted. The protein localises to the apical cell membrane. It localises to the basolateral cell membrane. It is found in the cell projection. The protein resides in the microvillus membrane. Functionally, may regulate MET signaling cascade. Seems to decrease hepatocyte growth factor (HGF)-induced transient MAPK activation. Blocks GRB2 recruitment to MET thus suppressing the GRB2-RAS pathway. Inhibits HGF-induced proliferation of MMP1 and MMP9 expression. This is Mucin-20 (MUC20) from Homo sapiens (Human).